Reading from the N-terminus, the 69-residue chain is U2-agatoxin-Ao1w (69 aa).

The first 20 residues, 1 to 20 (MRAIISLLLISAMVFSMIEA), serve as a signal peptide directing secretion. Positions 21-34 (VPVEEGLQLFEGER) are excised as a propeptide. Intrachain disulfides connect cysteine 37/cysteine 53, cysteine 44/cysteine 58, and cysteine 52/cysteine 68.

The protein belongs to the neurotoxin 01 (U2-agtx) family. Expressed by the venom gland.

It is found in the secreted. Its function is as follows. Insect active toxin causing rapid but reversible paralysis in crickets. No activity shown in mammals. Does not show effect on mammalian voltage-gated calcium channels. The protein is U2-agatoxin-Ao1w of Agelena orientalis (Funnel-web spider).